We begin with the raw amino-acid sequence, 178 residues long: Large ribosomal subunit protein uL6 (178 aa).

This sequence belongs to the universal ribosomal protein uL6 family. Part of the 50S ribosomal subunit.

In terms of biological role, this protein binds to the 23S rRNA, and is important in its secondary structure. It is located near the subunit interface in the base of the L7/L12 stalk, and near the tRNA binding site of the peptidyltransferase center. This Campylobacter lari (strain RM2100 / D67 / ATCC BAA-1060) protein is Large ribosomal subunit protein uL6.